The following is a 115-amino-acid chain: Large ribosomal subunit protein bL20 (115 aa).

It belongs to the bacterial ribosomal protein bL20 family.

Its function is as follows. Binds directly to 23S ribosomal RNA and is necessary for the in vitro assembly process of the 50S ribosomal subunit. It is not involved in the protein synthesizing functions of that subunit. This is Large ribosomal subunit protein bL20 from Prochlorococcus marinus (strain MIT 9301).